The chain runs to 260 residues: Snake venom serine protease homolog KN7 (260 aa).

A signal peptide spans 1 to 18; that stretch reads MVLIRVLANLLILQLSYA. The propeptide occupies 19–24; it reads QKSSEL. A Peptidase S1 domain is found at 25–251; the sequence is IIGGDECNIN…HLDWIKSIIA (227 aa). 6 disulfides stabilise this stretch: Cys31–Cys165, Cys52–Cys68, Cys100–Cys258, Cys144–Cys212, Cys176–Cys191, and Cys202–Cys227. Residues Asn83, Asn123, and Asn124 are each glycosylated (N-linked (GlcNAc...) asparagine).

Belongs to the peptidase S1 family. Snake venom subfamily. As to expression, expressed by the venom gland.

Its subcellular location is the secreted. Functionally, snake venom serine protease homolog that may act in the hemostasis system of the prey. The protein is Snake venom serine protease homolog KN7 of Trimeresurus stejnegeri (Chinese green tree viper).